Consider the following 438-residue polypeptide: Indole diterpene prenyltransferase janD (438 aa).

Residue 80–81 participates in L-tryptophan binding; it reads FM. Residues R102, K190, R264, K266, Y268, Y350, Y414, and Y418 each contribute to the substrate site.

Belongs to the tryptophan dimethylallyltransferase family.

It functions in the pathway secondary metabolite biosynthesis. In terms of biological role, indole diterpene prenyltransferase; part of the gene cluster that mediates the biosynthesis of the indole diterpenes janthitremanes such as shearinine K or shearinine A. The geranylgeranyl diphosphate (GGPP) synthase janG catalyzes the first step in janthitremane biosynthesis via conversion of farnesyl pyrophosphate and isopentyl pyrophosphate into geranylgeranyl pyrophosphate (GGPP). Condensation of indole-3-glycerol phosphate with GGPP by the prenyl transferase janC then forms 3-geranylgeranylindole (3-GGI). Epoxidation by the FAD-dependent monooxygenase janM leads to a epoxidized-GGI that is substrate of the terpene cyclase janB for cyclization to yield paspaline. Paspaline is subsequently converted to 13-desoxypaspaline by the cytochrome P450 monooxygenase janP, via beta-PC-M6 in a series of alpha-face oxidations. The cytochrome P450 monooxygenase janQ is proposed to carry out sequential beta-face oxidation steps at C-7 and C-13 of 13-desoxypaspaline to form paspalicine and paspalinine respectively. The indole diterpene prenyltransferase janD may then convert paspalinine into shearinine K which is substrate of janO and/or additional enzymes for oxidation and cyclization to generate shearinine A. The sequence is that of Indole diterpene prenyltransferase janD from Penicillium janthinellum (Penicillium vitale).